Reading from the N-terminus, the 290-residue chain is ATP synthase gamma chain (290 aa).

This sequence belongs to the ATPase gamma chain family. As to quaternary structure, F-type ATPases have 2 components, CF(1) - the catalytic core - and CF(0) - the membrane proton channel. CF(1) has five subunits: alpha(3), beta(3), gamma(1), delta(1), epsilon(1). CF(0) has three main subunits: a, b and c.

The protein localises to the cell membrane. Produces ATP from ADP in the presence of a proton gradient across the membrane. The gamma chain is believed to be important in regulating ATPase activity and the flow of protons through the CF(0) complex. The protein is ATP synthase gamma chain of Rubrobacter xylanophilus (strain DSM 9941 / JCM 11954 / NBRC 16129 / PRD-1).